The chain runs to 512 residues: Protein SHC1 (512 aa).

Acidic residues predominate over residues 101-113 (EQDEFENDVEDDA). 2 disordered regions span residues 101-122 (EQDE…EKSQ) and 144-164 (DGNS…ESVA). 4 Sel1-like repeats span residues 318–353 (PDAQ…KRMH), 354–389 (IESV…TKNH), 390–429 (PAAM…SMAS), and 433–470 (CGAP…ALGH).

Belongs to the SKT5 family.

Its subcellular location is the cytoplasm. The protein localises to the cytoplasmic granule membrane. Its function is as follows. Required for the activation of chitin synthase III (CHS3) activity during the sporulation process. This chain is Protein SHC1 (SHC1), found in Saccharomyces cerevisiae (strain ATCC 204508 / S288c) (Baker's yeast).